A 276-amino-acid polypeptide reads, in one-letter code: MAADGIDERSPLISPSSGNVTPTAPPYLQQNNLQAELPPPYTAIASPDASGVPVINCRVCQSLINLDGKLHQHVVKCTVCNEATPIKTPPLGKKYVRCPCNCLLICKDISRRIGCPRPNCRRIINLGPVMLIPEEQPAQPALPVQPEGTRVVCGHCGNTFLWMELRFNTLAKCPHCKKMNCQVPRIQGKNGSAPGKAFRSSVGSALPRRRCCTYITMGMICIFIGVGLTVGTQDFARRFHATYVSWAVAYLVGLVCLIRACYWGAIKFSYPEHSFA.

Positions 1–10 (MAADGIDERS) are enriched in basic and acidic residues. Positions 1-27 (MAADGIDERSPLISPSSGNVTPTAPPY) are disordered. The span at 13–27 (ISPSSGNVTPTAPPY) shows a compositional bias: polar residues. Cys106 is an active-site residue. The CX5R motif signature appears at 106–112 (CKDISRR). The next 2 helical transmembrane spans lie at 211–231 (CCTY…LTVG) and 246–266 (WAVA…WGAI).

It localises to the late endosome membrane. It is found in the lysosome membrane. The catalysed reaction is a 1,2-diacyl-sn-glycero-3-phospho-(1D-myo-inositol-4,5-bisphosphate) + H2O = a 1,2-diacyl-sn-glycero-3-phospho-(1D-myo-inositol-5-phosphate) + phosphate. Its function is as follows. Catalyzes the hydrolysis of phosphatidylinositol-4,5-bisphosphate (PtdIns-4,5-P2) to phosphatidylinositol-4-phosphate (PtdIns-4-P). This chain is Type 2 phosphatidylinositol 4,5-bisphosphate 4-phosphatase (pip4p2), found in Xenopus tropicalis (Western clawed frog).